We begin with the raw amino-acid sequence, 168 residues long: Photosystem I assembly protein Ycf3 (168 aa).

TPR repeat units follow at residues 35–68 (AFTYYRDGMSAQSEGNYAEALQNYYEAMRLEIDP), 72–105 (SYILYNIGLIHTSNGEHTKALEYYFRALERNPFL), and 120–153 (GEQAIQQGDSELAETWFDQAAEYWKQAIALTPGN).

Belongs to the Ycf3 family.

The protein resides in the plastid. The protein localises to the chloroplast thylakoid membrane. Its function is as follows. Essential for the assembly of the photosystem I (PSI) complex. May act as a chaperone-like factor to guide the assembly of the PSI subunits. This Ipomoea purpurea (Common morning glory) protein is Photosystem I assembly protein Ycf3.